The following is a 501-amino-acid chain: Cytochrome P450 4c21 (501 aa).

Heme contacts are provided by E309 and C447.

It belongs to the cytochrome P450 family. It depends on heme as a cofactor.

Its subcellular location is the endoplasmic reticulum membrane. The protein localises to the microsome membrane. It catalyses the reaction an organic molecule + reduced [NADPH--hemoprotein reductase] + O2 = an alcohol + oxidized [NADPH--hemoprotein reductase] + H2O + H(+). The chain is Cytochrome P450 4c21 (CYP4C21) from Blattella germanica (German cockroach).